Consider the following 287-residue polypeptide: Ribonuclease Z (287 aa).

Positions 64, 66, 68, 69, 124, 191, and 250 each coordinate Zn(2+). Residue Asp68 is the Proton acceptor of the active site.

This sequence belongs to the RNase Z family. As to quaternary structure, homodimer. Zn(2+) serves as cofactor.

It catalyses the reaction Endonucleolytic cleavage of RNA, removing extra 3' nucleotides from tRNA precursor, generating 3' termini of tRNAs. A 3'-hydroxy group is left at the tRNA terminus and a 5'-phosphoryl group is left at the trailer molecule.. Its function is as follows. Zinc phosphodiesterase, which displays some tRNA 3'-processing endonuclease activity. Probably involved in tRNA maturation, by removing a 3'-trailer from precursor tRNA. This is Ribonuclease Z from Pyrobaculum islandicum (strain DSM 4184 / JCM 9189 / GEO3).